A 1177-amino-acid chain; its full sequence is DNA-directed RNA polymerase subunit beta' (1177 aa).

Positions 60, 62, 75, and 78 each coordinate Zn(2+). Mg(2+) is bound by residues Asp-450, Asp-452, and Asp-454. Residues Cys-795, Cys-869, Cys-876, and Cys-879 each coordinate Zn(2+).

Belongs to the RNA polymerase beta' chain family. The RNAP catalytic core consists of 2 alpha, 1 beta, 1 beta' and 1 omega subunit. When a sigma factor is associated with the core the holoenzyme is formed, which can initiate transcription. Requires Mg(2+) as cofactor. Zn(2+) is required as a cofactor.

The catalysed reaction is RNA(n) + a ribonucleoside 5'-triphosphate = RNA(n+1) + diphosphate. Functionally, DNA-dependent RNA polymerase catalyzes the transcription of DNA into RNA using the four ribonucleoside triphosphates as substrates. The polypeptide is DNA-directed RNA polymerase subunit beta' (Clostridium botulinum (strain Eklund 17B / Type B)).